The following is a 773-amino-acid chain: Beta-hexosaminidase B (773 aa).

Positions 1–19 (MKFNRLMALLFGVSSPLYA) are cleaved as a signal peptide. Disulfide bonds link cysteine 46-cysteine 53, cysteine 389-cysteine 397, and cysteine 496-cysteine 542. The active-site Proton donor is glutamate 531.

Belongs to the glycosyl hydrolase 20 family.

The enzyme catalyses Hydrolysis of terminal non-reducing N-acetyl-D-hexosamine residues in N-acetyl-beta-D-hexosaminides.. In Pseudoalteromonas piscicida, this protein is Beta-hexosaminidase B (nag096).